Consider the following 194-residue polypeptide: 3-isopropylmalate dehydratase small subunit (194 aa).

It belongs to the LeuD family. LeuD type 1 subfamily. As to quaternary structure, heterodimer of LeuC and LeuD.

The catalysed reaction is (2R,3S)-3-isopropylmalate = (2S)-2-isopropylmalate. It participates in amino-acid biosynthesis; L-leucine biosynthesis; L-leucine from 3-methyl-2-oxobutanoate: step 2/4. Its function is as follows. Catalyzes the isomerization between 2-isopropylmalate and 3-isopropylmalate, via the formation of 2-isopropylmaleate. The protein is 3-isopropylmalate dehydratase small subunit of Anoxybacillus flavithermus (strain DSM 21510 / WK1).